The sequence spans 362 residues: Metacaspase-3 (362 aa).

Active-site residues include H174 and C230.

Belongs to the peptidase C14B family.

This is Metacaspase-3 (AMC3) from Arabidopsis thaliana (Mouse-ear cress).